A 597-amino-acid polypeptide reads, in one-letter code: Elongation factor 4 (597 aa).

The region spanning lysine 2–alanine 184 is the tr-type G domain. GTP-binding positions include aspartate 14 to threonine 19 and asparagine 131 to aspartate 134.

The protein belongs to the TRAFAC class translation factor GTPase superfamily. Classic translation factor GTPase family. LepA subfamily.

Its subcellular location is the cell inner membrane. It catalyses the reaction GTP + H2O = GDP + phosphate + H(+). Functionally, required for accurate and efficient protein synthesis under certain stress conditions. May act as a fidelity factor of the translation reaction, by catalyzing a one-codon backward translocation of tRNAs on improperly translocated ribosomes. Back-translocation proceeds from a post-translocation (POST) complex to a pre-translocation (PRE) complex, thus giving elongation factor G a second chance to translocate the tRNAs correctly. Binds to ribosomes in a GTP-dependent manner. The chain is Elongation factor 4 from Neisseria meningitidis serogroup A / serotype 4A (strain DSM 15465 / Z2491).